A 900-amino-acid polypeptide reads, in one-letter code: Probable dipeptidyl-aminopeptidase B (900 aa).

The interval methionine 1–serine 83 is disordered. The Cytoplasmic portion of the chain corresponds to methionine 1–arginine 90. Over residues asparagine 24 to phenylalanine 39 the composition is skewed to low complexity. Over residues asparagine 44 to proline 55 the composition is skewed to polar residues. Residues tryptophan 91–tryptophan 111 traverse the membrane as a helical; Signal-anchor for type II membrane protein segment. At glycine 112 to threonine 900 the chain is on the vacuolar side. 7 N-linked (GlcNAc...) asparagine glycosylation sites follow: asparagine 150, asparagine 195, asparagine 348, asparagine 410, asparagine 514, asparagine 639, and asparagine 644. The Charge relay system role is filled by serine 753. Asparagine 812 is a glycosylation site (N-linked (GlcNAc...) asparagine). Catalysis depends on charge relay system residues aspartate 830 and histidine 863.

It belongs to the peptidase S9B family.

The protein resides in the vacuole membrane. The enzyme catalyses Release of an N-terminal dipeptide, Xaa-Yaa-|-Zaa-, from a polypeptide, preferentially when Yaa is Pro, provided Zaa is neither Pro nor hydroxyproline.. Its function is as follows. Type IV dipeptidyl-peptidase which removes N-terminal dipeptides sequentially from polypeptides having unsubstituted N-termini provided that the penultimate residue is proline. This chain is Probable dipeptidyl-aminopeptidase B (dapB), found in Talaromyces stipitatus (strain ATCC 10500 / CBS 375.48 / QM 6759 / NRRL 1006) (Penicillium stipitatum).